Consider the following 407-residue polypeptide: Substance-P receptor (407 aa).

The disordered stretch occupies residues 1–20; it reads MDNVLPVDSDLFPNTSTNTS. Over 1-31 the chain is Extracellular; the sequence is MDNVLPVDSDLFPNTSTNTSESNQFVQPTWQ. 2 N-linked (GlcNAc...) asparagine glycosylation sites follow: asparagine 14 and asparagine 18. A helical membrane pass occupies residues 32–54; it reads IVLWAAAYTVIVVTSVVGNVVVI. Over 55-64 the chain is Cytoplasmic; that stretch reads WIILAHKRMR. The helical transmembrane segment at 65–86 threads the bilayer; sequence TVTNYFLVNLAFAEACMAAFNT. Residues 87-106 are Extracellular-facing; the sequence is VVNFTYAVHNVWYYGLFYCK. A disulfide bond links cysteine 105 and cysteine 180. A helical transmembrane segment spans residues 107–128; sequence FHNFFPIAALFASIYSMTAVAF. Topologically, residues 129–148 are cytoplasmic; it reads DRYMAIIHPLQPRLSATATK. The chain crosses the membrane as a helical span at residues 149 to 169; it reads VVIFVIWVLALLLAFPQGYYS. Over 170-194 the chain is Extracellular; the sequence is TTETMPSRVVCMIEWPEHPNRTYEK. A helical membrane pass occupies residues 195-219; it reads AYHICVTVLIYFLPLLVIGYAYTVV. The Cytoplasmic segment spans residues 220-248; the sequence is GITLWASEIPGDSSDRYHEQVSAKRKVVK. Residues 249-270 traverse the membrane as a helical segment; that stretch reads MMIVVVCTFAICWLPFHIFFLL. At 271–283 the chain is on the extracellular side; sequence PYINPDLYLKKFI. The helical transmembrane segment at 284–308 threads the bilayer; that stretch reads QQVYLASMWLAMSSTMYNPIIYCCL. Residues 309–407 are Cytoplasmic-facing; sequence NDRFRLGFKH…SSSFYSNMLA (99 aa). Cysteine 322 carries S-palmitoyl cysteine lipidation. The interval 362–407 is disordered; it reads VGAHEDEPEEGPKATPSSLDLTSNGSSRSNSKTMTESSSFYSNMLA. Residues 376–407 are compositionally biased toward polar residues; it reads TPSSLDLTSNGSSRSNSKTMTESSSFYSNMLA.

The protein belongs to the G-protein coupled receptor 1 family. Interacts with ARRB1.

It is found in the cell membrane. Its function is as follows. This is a receptor for the tachykinin neuropeptide substance P. It is probably associated with G proteins that activate a phosphatidylinositol-calcium second messenger system. The rank order of affinity of this receptor to tachykinins is: substance P &gt; substance K &gt; neuromedin K. The chain is Substance-P receptor (Tacr1) from Mus musculus (Mouse).